We begin with the raw amino-acid sequence, 215 residues long: uncharacterized protein (215 aa).

Active-site charge relay system residues include Ser-114, Asp-162, and His-194.

Belongs to the AB hydrolase superfamily. AB hydrolase 2 family.

This is an uncharacterized protein from Rickettsia felis (strain ATCC VR-1525 / URRWXCal2) (Rickettsia azadi).